The chain runs to 215 residues: Ribonuclease T (215 aa).

An Exonuclease domain is found at 20–194 (VVIDVETAGF…YDTERTAVLF (175 aa)). Mg(2+) is bound by residues Asp23, Glu25, His181, and Asp186. The active-site Proton donor/acceptor is His181.

It belongs to the RNase T family. Homodimer. It depends on Mg(2+) as a cofactor.

In terms of biological role, trims short 3' overhangs of a variety of RNA species, leaving a one or two nucleotide 3' overhang. Responsible for the end-turnover of tRNA: specifically removes the terminal AMP residue from uncharged tRNA (tRNA-C-C-A). Also appears to be involved in tRNA biosynthesis. This chain is Ribonuclease T, found in Salmonella paratyphi A (strain ATCC 9150 / SARB42).